A 498-amino-acid chain; its full sequence is L-proline--[L-prolyl-carrier protein] ligase (498 aa).

The protein belongs to the ATP-dependent AMP-binding enzyme family.

The catalysed reaction is holo-[peptidyl-carrier protein] + L-proline + ATP = L-prolyl-[peptidyl-carrier protein] + AMP + diphosphate. Involved in the biosynthesis of pyoluteorin. Catalyzes the conversion of L-proline to L-prolyl-AMP and the transfer of the L-prolyl group to acyl carrier protein PltL. This Pseudomonas fluorescens (strain ATCC BAA-477 / NRRL B-23932 / Pf-5) protein is L-proline--[L-prolyl-carrier protein] ligase.